A 118-amino-acid chain; its full sequence is Late cornified envelope protein 1F (118 aa).

Low complexity predominate over residues methionine 1–cysteine 10. 2 disordered regions span residues methionine 1–lysine 23 and arginine 82–cysteine 118. Residues glutamine 11 to lysine 23 are compositionally biased toward pro residues. Low complexity predominate over residues cysteine 95 to serine 104. The span at cysteine 105–cysteine 118 shows a compositional bias: gly residues.

This sequence belongs to the LCE family. As to expression, skin-specific. Expression was readily detected in adult trunk skin, adult arm skin, fetal skin, penal skin, vulva, esophagus and tongue. Not expressed in the cervix, rectum, lung, colon, or placenta. Expression is observed in the fibroblasts.

In terms of biological role, precursors of the cornified envelope of the stratum corneum. This is Late cornified envelope protein 1F (LCE1F) from Homo sapiens (Human).